A 274-amino-acid chain; its full sequence is Cytochrome b-c1 complex subunit Rieske, mitochondrial (274 aa).

The Mitochondrial matrix portion of the chain corresponds to 79 to 103 (SHTDIKVPDFSDYRRPEVLDSTKSS). A helical transmembrane segment spans residues 104–140 (KESSEARKGFSYLVTATTTVGVAYAAKNVVSQFVSSM). Residues 141-274 (SASADVLAMS…FTSDDMVIVG (134 aa)) are Mitochondrial intermembrane-facing. Positions 187 to 272 (EAAVEVSQLR…YEFTSDDMVI (86 aa)) constitute a Rieske domain. The [2Fe-2S] cluster site is built by cysteine 217, histidine 219, cysteine 236, histidine 239, and serine 241. Cysteine 222 and cysteine 238 are oxidised to a cystine.

The protein belongs to the Rieske iron-sulfur protein family. As to quaternary structure, component of the ubiquinol-cytochrome c oxidoreductase (cytochrome b-c1 complex, complex III, CIII), a multisubunit enzyme composed of 11 subunits. The complex is composed of 3 respiratory subunits cytochrome b, cytochrome c1 and Rieske protein UQCRFS1, 2 core protein subunits UQCRC1/QCR1 and UQCRC2/QCR2, and 6 low-molecular weight protein subunits UQCRH/QCR6, UQCRB/QCR7, UQCRQ/QCR8, UQCR10/QCR9, UQCR11/QCR10 and subunit 9, the cleavage product of Rieske protein UQCRFS1. The complex exists as an obligatory dimer and forms supercomplexes (SCs) in the inner mitochondrial membrane with NADH-ubiquinone oxidoreductase (complex I, CI) and cytochrome c oxidase (complex IV, CIV), resulting in different assemblies (supercomplex SCI(1)III(2)IV(1) and megacomplex MCI(2)III(2)IV(2)). Incorporation of the Rieske protein UQCRFS1 is the penultimate step in complex III assembly. Interacts with TTC19, which is involved in the clearance of UQCRFS1 fragments. In terms of assembly, component of the ubiquinol-cytochrome c oxidoreductase (cytochrome b-c1 complex, complex III, CIII). Subunit 9 corresponds to the mitochondrial targeting sequence (MTS) of Rieske protein UQCRFS1. It is retained after processing and incorporated inside complex III, where it remains bound to the complex and localizes between the 2 core subunits UQCRC1/QCR1 and UQCRC2/QCR2. [2Fe-2S] cluster serves as cofactor. Post-translationally, proteolytic processing is necessary for the correct insertion of UQCRFS1 in the complex III dimer. Several fragments are generated during UQCRFS1 insertion, most probably due to the endogenous matrix-processing peptidase (MPP) activity of the 2 core protein subunits UQCRC1/QCR1 and UQCRC2/QCR2, which are homologous to the 2 mitochondrial-processing peptidase (MPP) subunits beta-MPP and alpha-MPP respectively. The action of the protease is also necessary for the clearance of the UQCRFS1 fragments.

It localises to the mitochondrion inner membrane. It catalyses the reaction a quinol + 2 Fe(III)-[cytochrome c](out) = a quinone + 2 Fe(II)-[cytochrome c](out) + 2 H(+)(out). Functionally, component of the ubiquinol-cytochrome c oxidoreductase, a multisubunit transmembrane complex that is part of the mitochondrial electron transport chain which drives oxidative phosphorylation. The respiratory chain contains 3 multisubunit complexes succinate dehydrogenase (complex II, CII), ubiquinol-cytochrome c oxidoreductase (cytochrome b-c1 complex, complex III, CIII) and cytochrome c oxidase (complex IV, CIV), that cooperate to transfer electrons derived from NADH and succinate to molecular oxygen, creating an electrochemical gradient over the inner membrane that drives transmembrane transport and the ATP synthase. The cytochrome b-c1 complex catalyzes electron transfer from ubiquinol to cytochrome c, linking this redox reaction to translocation of protons across the mitochondrial inner membrane, with protons being carried across the membrane as hydrogens on the quinol. In the process called Q cycle, 2 protons are consumed from the matrix, 4 protons are released into the intermembrane space and 2 electrons are passed to cytochrome c. The Rieske protein is a catalytic core subunit containing a [2Fe-2S] iron-sulfur cluster. It cycles between 2 conformational states during catalysis to transfer electrons from the quinol bound in the Q(0) site in cytochrome b to cytochrome c1. Incorporation of UQCRFS1 is the penultimate step in complex III assembly. In terms of biological role, component of the ubiquinol-cytochrome c oxidoreductase (cytochrome b-c1 complex, complex III, CIII). UQCRFS1 undergoes proteolytic processing once it is incorporated in the complex III dimer. One of the fragments, called subunit 9, corresponds to its mitochondrial targeting sequence (MTS). The proteolytic processing is necessary for the correct insertion of UQCRFS1 in the complex III dimer, but the persistence of UQCRFS1-derived fragments may prevent newly imported UQCRFS1 to be processed and assembled into complex III and is detrimental for the complex III structure and function. This chain is Cytochrome b-c1 complex subunit Rieske, mitochondrial (UQCRFS1), found in Bos taurus (Bovine).